A 550-amino-acid chain; its full sequence is Glucose-6-phosphate isomerase (550 aa).

The active-site Proton donor is Glu356. Residues His387 and Lys515 contribute to the active site.

It belongs to the GPI family.

The protein localises to the cytoplasm. It carries out the reaction alpha-D-glucose 6-phosphate = beta-D-fructose 6-phosphate. The protein operates within carbohydrate biosynthesis; gluconeogenesis. It functions in the pathway carbohydrate degradation; glycolysis; D-glyceraldehyde 3-phosphate and glycerone phosphate from D-glucose: step 2/4. Its function is as follows. Catalyzes the reversible isomerization of glucose-6-phosphate to fructose-6-phosphate. In Vibrio parahaemolyticus serotype O3:K6 (strain RIMD 2210633), this protein is Glucose-6-phosphate isomerase.